We begin with the raw amino-acid sequence, 80 residues long: Small ribosomal subunit protein bS16 (80 aa).

Belongs to the bacterial ribosomal protein bS16 family.

This is Small ribosomal subunit protein bS16 from Blochmanniella pennsylvanica (strain BPEN).